Here is a 1037-residue protein sequence, read N- to C-terminus: Exportin-T (1037 aa).

The protein belongs to the exportin family.

The protein resides in the nucleus. It is found in the cytoplasm. TRNA nucleus export receptor which facilitates tRNA translocation across the nuclear pore complex. Involved in pre-tRNA splicing, probably by affecting the interaction of pre-tRNA with splicing endonuclease. In Neosartorya fischeri (strain ATCC 1020 / DSM 3700 / CBS 544.65 / FGSC A1164 / JCM 1740 / NRRL 181 / WB 181) (Aspergillus fischerianus), this protein is Exportin-T (los1).